Reading from the N-terminus, the 202-residue chain is Venom allergen 5.02 (202 aa).

4 cysteine pairs are disulfide-bonded: C4–C16, C8–C101, C26–C94, and C168–C185. Residues 46 to 187 (KQHNEFRQKV…WHRHYLVCNY (142 aa)) enclose the SCP domain.

This sequence belongs to the CRISP family. Venom allergen 5-like subfamily. Expressed by the venom gland.

It is found in the secreted. The polypeptide is Venom allergen 5.02 (Vespa crabro (European hornet)).